Here is a 341-residue protein sequence, read N- to C-terminus: Sphingolipid long chain base-responsive protein LSP1 (341 aa).

The span at 1 to 11 shows a compositional bias: polar residues; it reads MHRTYSLRNQR. The disordered stretch occupies residues 1–32; sequence MHRTYSLRNQRAPTAAELQAPPPPPSSTKSKF. Position 233 is a phosphothreonine (Thr233). Acidic residues-rich tracts occupy residues 282-294 and 305-323; these read YEDEDGEEEEEPE and VEEEEVEWTTEVPVDDEAH. The disordered stretch occupies residues 282-341; the sequence is YEDEDGEEEEEPEIQNGDIPGQVVEEEEVEWTTEVPVDDEAHEADHHVSQNGHTSGSENI. The span at 330–341 shows a compositional bias: polar residues; that stretch reads SQNGHTSGSENI.

Post-translationally, phosphorylated by PKH1 and PKH2. Phosphorylation is stimulated by sphingolipid long chain bases (LCBs). In terms of processing, N-glycosylated.

It is found in the cytoplasm. Its subcellular location is the cell cortex. Its function is as follows. Together with PIL1, main component of eisosomes, structures at the cell periphery underneath the plasma membrane that mark the site of endocytosis. Negative regulator of cell wall integrity (CWI) in unstressed cells, probably by inhibiting protein kinase PKH1/PHK2 activity and regulating their downstream CWI pathways PKC1-MAP kinase pathway and protein kinase YPK1 pathway. Activity may be regulated by the transient increase of sphingolipid long chain bases (LCBs) during heat stress. This Saccharomyces cerevisiae (strain ATCC 204508 / S288c) (Baker's yeast) protein is Sphingolipid long chain base-responsive protein LSP1 (LSP1).